We begin with the raw amino-acid sequence, 185 residues long: Ribosome-recycling factor (185 aa).

The segment at 139 to 159 (IDSLEKDGDVSGDEADRAKKK) is disordered. Residues 141–159 (SLEKDGDVSGDEADRAKKK) show a composition bias toward basic and acidic residues.

The protein belongs to the RRF family.

Its subcellular location is the cytoplasm. Responsible for the release of ribosomes from messenger RNA at the termination of protein biosynthesis. May increase the efficiency of translation by recycling ribosomes from one round of translation to another. The sequence is that of Ribosome-recycling factor from Sorangium cellulosum (strain So ce56) (Polyangium cellulosum (strain So ce56)).